The primary structure comprises 366 residues: Phospho-N-acetylmuramoyl-pentapeptide-transferase (366 aa).

The next 10 membrane-spanning stretches (helical) occupy residues 27–47 (AALFTSALIVFLFGPTIINSL), 71–91 (TPTMGGLMILAGIVGASLLWA), 93–113 (LSNVYVVATLLVTLGFGAIGF), 138–158 (FVIAGIAVYFMMRTALASGIA), 174–194 (FMINIGIMFVVFGGFVIVGAG), 205–225 (GLAIVPVMIAAASFGVIAYLA), 245–265 (LAVVLGAVIGAGLGFLWFNAP), 268–288 (AIFMGDTGSLALGGTIGTVAV), 294–314 (IVMAIIGGLFVIETLSVIIQV), and 343–363 (QVVIRFWIVAVGLAMLGLSTL).

This sequence belongs to the glycosyltransferase 4 family. MraY subfamily. Requires Mg(2+) as cofactor.

It localises to the cell inner membrane. It catalyses the reaction UDP-N-acetyl-alpha-D-muramoyl-L-alanyl-gamma-D-glutamyl-meso-2,6-diaminopimeloyl-D-alanyl-D-alanine + di-trans,octa-cis-undecaprenyl phosphate = di-trans,octa-cis-undecaprenyl diphospho-N-acetyl-alpha-D-muramoyl-L-alanyl-D-glutamyl-meso-2,6-diaminopimeloyl-D-alanyl-D-alanine + UMP. Its pathway is cell wall biogenesis; peptidoglycan biosynthesis. Catalyzes the initial step of the lipid cycle reactions in the biosynthesis of the cell wall peptidoglycan: transfers peptidoglycan precursor phospho-MurNAc-pentapeptide from UDP-MurNAc-pentapeptide onto the lipid carrier undecaprenyl phosphate, yielding undecaprenyl-pyrophosphoryl-MurNAc-pentapeptide, known as lipid I. The protein is Phospho-N-acetylmuramoyl-pentapeptide-transferase of Rhizobium johnstonii (strain DSM 114642 / LMG 32736 / 3841) (Rhizobium leguminosarum bv. viciae).